The chain runs to 682 residues: Elongation factor G (682 aa).

The tr-type G domain maps to 8-282 (QKFRNFGIMA…AVVDYLPSPV (275 aa)). GTP is bound by residues 17 to 24 (AHIDAGKT), 81 to 85 (DTPGH), and 135 to 138 (NKMD).

Belongs to the TRAFAC class translation factor GTPase superfamily. Classic translation factor GTPase family. EF-G/EF-2 subfamily.

It is found in the cytoplasm. Catalyzes the GTP-dependent ribosomal translocation step during translation elongation. During this step, the ribosome changes from the pre-translocational (PRE) to the post-translocational (POST) state as the newly formed A-site-bound peptidyl-tRNA and P-site-bound deacylated tRNA move to the P and E sites, respectively. Catalyzes the coordinated movement of the two tRNA molecules, the mRNA and conformational changes in the ribosome. This Malacoplasma penetrans (strain HF-2) (Mycoplasma penetrans) protein is Elongation factor G.